The sequence spans 241 residues: uncharacterized protein (241 aa).

This sequence belongs to the AB hydrolase superfamily. AB hydrolase 2 family.

This is an uncharacterized protein from Schizosaccharomyces pombe (strain 972 / ATCC 24843) (Fission yeast).